The primary structure comprises 555 residues: mRNA cleavage and polyadenylation factor CLP1 (555 aa).

Residues E30, K69, and Y156–S161 each bind ATP. The disordered stretch occupies residues D431–G451.

It belongs to the Clp1 family. Clp1 subfamily. Component of a pre-mRNA cleavage factor complex. Interacts directly with PCF11.

The protein resides in the nucleus. Its function is as follows. Required for endonucleolytic cleavage during polyadenylation-dependent pre-mRNA 3'-end formation. In Lodderomyces elongisporus (strain ATCC 11503 / CBS 2605 / JCM 1781 / NBRC 1676 / NRRL YB-4239) (Yeast), this protein is mRNA cleavage and polyadenylation factor CLP1.